The primary structure comprises 227 residues: tRNA (guanine-N(1)-)-methyltransferase (227 aa).

Residues Gly-112 and 131 to 136 (LGDFVL) contribute to the S-adenosyl-L-methionine site.

This sequence belongs to the RNA methyltransferase TrmD family. As to quaternary structure, homodimer.

The protein localises to the cytoplasm. The catalysed reaction is guanosine(37) in tRNA + S-adenosyl-L-methionine = N(1)-methylguanosine(37) in tRNA + S-adenosyl-L-homocysteine + H(+). Functionally, specifically methylates guanosine-37 in various tRNAs. This is tRNA (guanine-N(1)-)-methyltransferase from Trichodesmium erythraeum (strain IMS101).